A 212-amino-acid chain; its full sequence is Phosphoribosylformylglycinamidine synthase subunit PurQ (212 aa).

Residues Arg-2–Arg-212 form the Glutamine amidotransferase type-1 domain. Cys-85 (nucleophile) is an active-site residue. Residues His-183, Glu-185, and His-191 contribute to the active site.

As to quaternary structure, part of the FGAM synthase complex composed of 1 PurL, 1 PurQ and 2 PurS subunits.

The protein localises to the cytoplasm. It carries out the reaction N(2)-formyl-N(1)-(5-phospho-beta-D-ribosyl)glycinamide + L-glutamine + ATP + H2O = 2-formamido-N(1)-(5-O-phospho-beta-D-ribosyl)acetamidine + L-glutamate + ADP + phosphate + H(+). It catalyses the reaction L-glutamine + H2O = L-glutamate + NH4(+). It participates in purine metabolism; IMP biosynthesis via de novo pathway; 5-amino-1-(5-phospho-D-ribosyl)imidazole from N(2)-formyl-N(1)-(5-phospho-D-ribosyl)glycinamide: step 1/2. Functionally, part of the phosphoribosylformylglycinamidine synthase complex involved in the purines biosynthetic pathway. Catalyzes the ATP-dependent conversion of formylglycinamide ribonucleotide (FGAR) and glutamine to yield formylglycinamidine ribonucleotide (FGAM) and glutamate. The FGAM synthase complex is composed of three subunits. PurQ produces an ammonia molecule by converting glutamine to glutamate. PurL transfers the ammonia molecule to FGAR to form FGAM in an ATP-dependent manner. PurS interacts with PurQ and PurL and is thought to assist in the transfer of the ammonia molecule from PurQ to PurL. This is Phosphoribosylformylglycinamidine synthase subunit PurQ from Pyrobaculum aerophilum (strain ATCC 51768 / DSM 7523 / JCM 9630 / CIP 104966 / NBRC 100827 / IM2).